Here is a 302-residue protein sequence, read N- to C-terminus: GTP cyclohydrolase FolE2 (302 aa).

Residues 1–27 (MPKKQLPPKEERHKLFGSVPPKERTKP) are disordered.

Belongs to the GTP cyclohydrolase IV family.

The catalysed reaction is GTP + H2O = 7,8-dihydroneopterin 3'-triphosphate + formate + H(+). It functions in the pathway cofactor biosynthesis; 7,8-dihydroneopterin triphosphate biosynthesis; 7,8-dihydroneopterin triphosphate from GTP: step 1/1. Functionally, converts GTP to 7,8-dihydroneopterin triphosphate. The protein is GTP cyclohydrolase FolE2 of Oceanobacillus iheyensis (strain DSM 14371 / CIP 107618 / JCM 11309 / KCTC 3954 / HTE831).